We begin with the raw amino-acid sequence, 932 residues long: UPF0182 protein Syncc9902_1151 (932 aa).

A run of 9 helical transmembrane segments spans residues 4–24 (FLWI…VEWV), 40–60 (MLQL…VLWL), 85–105 (VLMV…DLAI), 124–144 (MASE…VSLC), 151–171 (WVAV…WGVW), 201–221 (IQLG…HAVW), 243–263 (YRWL…LVWL), 293–313 (LLAF…IGHL), and 315–335 (RLLL…TPLT).

This sequence belongs to the UPF0182 family.

It localises to the cell membrane. This Synechococcus sp. (strain CC9902) protein is UPF0182 protein Syncc9902_1151.